Consider the following 160-residue polypeptide: Transcriptional repressor NrdR (160 aa).

Residues 3–34 (CPYCQYEDTQVKDSRPAEEGAVIRRRRVCSVC) fold into a zinc finger. The ATP-cone domain maps to 49 to 139 (LLITKKNGRC…VYRDFRNASD (91 aa)).

Belongs to the NrdR family. The cofactor is Zn(2+).

Its function is as follows. Negatively regulates transcription of bacterial ribonucleotide reductase nrd genes and operons by binding to NrdR-boxes. This is Transcriptional repressor NrdR from Bartonella tribocorum (strain CIP 105476 / IBS 506).